Here is a 408-residue protein sequence, read N- to C-terminus: LL-diaminopimelate aminotransferase (408 aa).

2 residues coordinate substrate: Y15 and G42. Residues Y72, 108–109 (SK), Y132, N187, Y218, and 246–248 (SFS) contribute to the pyridoxal 5'-phosphate site. The substrate site is built by K109, Y132, and N187. Residue K249 is modified to N6-(pyridoxal phosphate)lysine. The pyridoxal 5'-phosphate site is built by R257 and N292. Residues N292 and R388 each coordinate substrate.

It belongs to the class-I pyridoxal-phosphate-dependent aminotransferase family. LL-diaminopimelate aminotransferase subfamily. As to quaternary structure, homodimer. The cofactor is pyridoxal 5'-phosphate.

The catalysed reaction is (2S,6S)-2,6-diaminopimelate + 2-oxoglutarate = (S)-2,3,4,5-tetrahydrodipicolinate + L-glutamate + H2O + H(+). It participates in amino-acid biosynthesis; L-lysine biosynthesis via DAP pathway; LL-2,6-diaminopimelate from (S)-tetrahydrodipicolinate (aminotransferase route): step 1/1. In terms of biological role, involved in the synthesis of meso-diaminopimelate (m-DAP or DL-DAP), required for both lysine and peptidoglycan biosynthesis. Catalyzes the direct conversion of tetrahydrodipicolinate to LL-diaminopimelate. This Leptospira borgpetersenii serovar Hardjo-bovis (strain JB197) protein is LL-diaminopimelate aminotransferase.